We begin with the raw amino-acid sequence, 198 residues long: Dermorphin-2 (198 aa).

The N-terminal stretch at 1 to 20 is a signal peptide; sequence MSFLKKSLLLILFLGLVSLS. Positions 21 to 45 are excised as a propeptide; the sequence is VCKEEKRVSEEENENEENHEEGSEM. Residues 24 to 198 are disordered; that stretch reads EEKRVSEEEN…AFGYPSGEAK (175 aa). A D-alanine (Ala) modification is found at alanine 49. Serine 54 carries the serine amide modification. Basic and acidic residues predominate over residues 56–65; sequence EAKKIKRESE. The propeptide occupies 56-80; that stretch reads EAKKIKRESEEEKEIEENHEEGSEM. Alanine 84 carries the D-alanine (Ala) modification. Serine 89 carries the post-translational modification Serine amide. Residues 91–115 constitute a propeptide that is removed on maturation; sequence EAKKIKRESEEENENEENHEEGSEM. Residues 100–109 show a composition bias toward acidic residues; sequence EEENENEENH. The residue at position 119 (alanine 119) is a D-alanine (Ala). A Serine amide modification is found at serine 124. Residues 126–135 are compositionally biased toward basic and acidic residues; the sequence is EAKKIKRESE. Residues 126 to 150 constitute a propeptide that is removed on maturation; the sequence is EAKKIKRESEEEKEIEENHEEGSEM. Alanine 154 carries the D-alanine (Ala) modification. Position 159 is a serine amide (serine 159). Positions 161–185 are excised as a propeptide; the sequence is EAKKIKRESEEENENEENHEEGSEM. Residues 170-179 are compositionally biased toward acidic residues; sequence EEENENEENH. Residue alanine 189 is modified to D-alanine (Ala). Serine 194 carries the post-translational modification Serine amide. The propeptide occupies 196-198; it reads EAK.

This sequence belongs to the frog skin active peptide (FSAP) family. Dermorphin subfamily. In terms of tissue distribution, expressed by the skin glands.

It localises to the secreted. Dermorphin has a very potent opiate-like activity. It has high affinity and selectivity for mu-type opioid receptors. The chain is Dermorphin-2 from Phyllomedusa sauvagei (Sauvage's leaf frog).